The sequence spans 216 residues: Ras-related protein Rab-5C (216 aa).

Positions 30, 31, 33, 34, 35, 36, 47, 48, 53, and 79 each coordinate GTP. Residue serine 35 coordinates Mg(2+). 2 consecutive short sequence motifs (switch) follow at residues 45-57 and 78-94; these read QFHEYQESTIGAA and AGQERYHSLAPMYYRGA. Position 53 (threonine 53) interacts with Mg(2+). Serine 85 is modified (phosphoserine; by LRRK2). Residues asparagine 134, lysine 135, aspartate 137, alanine 165, and lysine 166 each coordinate GTP. A disordered region spans residues 185-216; sequence NEPQNATGAPGRNRGVDLQENNPASRSQCCSN. The segment covering 203-216 has biased composition (polar residues); that stretch reads QENNPASRSQCCSN. S-geranylgeranyl cysteine attachment occurs at residues cysteine 213 and cysteine 214.

The protein belongs to the small GTPase superfamily. Rab family. As to quaternary structure, interacts with EEA1. Interacts with INCA1. Interacts with GDI1, GDI2, CHML and CHM; phosphorylation at Ser-85 disrupts this interaction. It depends on Mg(2+) as a cofactor. In terms of processing, phosphorylation of Ser-85 in the switch II region by LRRK2 prevents the association of RAB regulatory proteins, including CHM, CHML and RAB GDP dissociation inhibitors GDI1 and GDI2. Post-translationally, (Microbial infection) Glycosylated on arginine residues by S.typhimurium protein Ssek3.

The protein resides in the cell membrane. It localises to the early endosome membrane. It is found in the melanosome. It carries out the reaction GTP + H2O = GDP + phosphate + H(+). Regulated by guanine nucleotide exchange factors (GEFs) which promote the exchange of bound GDP for free GTP. Regulated by GTPase activating proteins (GAPs) which increase the GTP hydrolysis activity. Inhibited by GDP dissociation inhibitors (GDIs). Functionally, the small GTPases Rab are key regulators of intracellular membrane trafficking, from the formation of transport vesicles to their fusion with membranes. Rabs cycle between an inactive GDP-bound form and an active GTP-bound form that is able to recruit to membranes different sets of downstream effectors directly responsible for vesicle formation, movement, tethering and fusion. The chain is Ras-related protein Rab-5C from Homo sapiens (Human).